The chain runs to 429 residues: Histidine--tRNA ligase (429 aa).

It belongs to the class-II aminoacyl-tRNA synthetase family. Homodimer.

The protein resides in the cytoplasm. It carries out the reaction tRNA(His) + L-histidine + ATP = L-histidyl-tRNA(His) + AMP + diphosphate + H(+). The chain is Histidine--tRNA ligase from Streptococcus pneumoniae (strain Taiwan19F-14).